We begin with the raw amino-acid sequence, 496 residues long: MSGSNVVLCILDGWGNGSGGRYDAIHAAYTPFWDTAVSCCPMSSLSASGTDVGLPSGQVGNSEVGHISIGCGRIVLQDLLRINLEINEVHKNPKLLDFVRDIQAKGGVCHMIGLLSDGGVHSLQAHMETIIEVITGFGIKVFIHVILDGRDVPPRSAEKYIGMLNAKIEHLNAEIATVAGRYYAMDRDNRLDRTCKAYDAIAYATGPRSGSAMEALEKSYNSGVTDEFMVPTVIGDYDGMGAEDGVLFTNFRNDRVLQLLGMLLHRFPEVSNVLGMRQYSEKMRIASLFPPREIHRSLGEVISERGLKQLRIAETEKFAHVTFFFNGGREEPFTGEDRIIIPSPDVSTYDLKPEMSAVEITDSLVERINSQQYALTVVNYANADMVGHTGNMEAAKKAVTTVDSCLQRVFYAAVNAGAVMLITADHGNAEKMFDVQNDSPFTAHTSSMVPFVVCNADGDISLSDGRLCDVAPTVLDLMNIPQPSDMTGCSLITRNS.

Mn(2+) contacts are provided by Asp-12 and Ser-62. Ser-62 functions as the Phosphoserine intermediate in the catalytic mechanism. Substrate is bound by residues His-121, 150-151 (RD), Arg-181, Arg-187, 252-255 (RNDR), and Lys-317. The Mn(2+) site is built by Asp-384, His-388, Asp-425, His-426, and His-444.

This sequence belongs to the BPG-independent phosphoglycerate mutase family. Monomer. Mn(2+) is required as a cofactor.

It catalyses the reaction (2R)-2-phosphoglycerate = (2R)-3-phosphoglycerate. The protein operates within carbohydrate degradation; glycolysis; pyruvate from D-glyceraldehyde 3-phosphate: step 3/5. Catalyzes the interconversion of 2-phosphoglycerate and 3-phosphoglycerate. The sequence is that of 2,3-bisphosphoglycerate-independent phosphoglycerate mutase from Anaplasma phagocytophilum (strain HZ).